Here is a 662-residue protein sequence, read N- to C-terminus: Mitochondrial Rho GTPase 1 (662 aa).

Over 1–634 the chain is Cytoplasmic; that stretch reads MTKETIRVVI…AKDVDYRQTA (634 aa). Residues 3–185 enclose the Miro 1 domain; that stretch reads KETIRVVICG…FYLCQRAITH (183 aa). GTP-binding positions include 12–19, 62–64, and 116–119; these read GDEGVGKS, DTS, and NKCD. 2 EF-hand domains span residues 201–236 and 330–365; these read LAVMALKRIFLLSDLNQDSYLDDNEILGLQKKCFNK and KGYRFLVDIFLKFDIDNDGGLNNQELHRLFKCTPGL. Ca(2+) is bound by residues Asp-214, Asn-216, Asp-218, Tyr-220, Glu-225, Asp-343, Asp-345, Asp-347, and Glu-354. In terms of domain architecture, Miro 2 spans 446–611; it reads RKVFNCFVIG…FIKITEAALD (166 aa). Residues 455–462, 491–495, and 560–563 contribute to the GTP site; these read GKPCCGKS, ELKGG, and SKAD. Residues 635-655 traverse the membrane as a helical; Anchor for type IV membrane protein segment; the sequence is LIFGSTVGFVALCSFTLMKLF. Residues 656 to 662 are Mitochondrial intermembrane-facing; that stretch reads KSSKFSK.

Belongs to the mitochondrial Rho GTPase family.

The protein localises to the mitochondrion outer membrane. Functionally, mitochondrial GTPase involved in mitochondrial trafficking. Probably involved in control of anterograde transport of mitochondria and their subcellular distribution. In Saccharomyces cerevisiae (strain ATCC 204508 / S288c) (Baker's yeast), this protein is Mitochondrial Rho GTPase 1 (GEM1).